The sequence spans 197 residues: UPF0301 protein Adeh_3962 (197 aa).

This sequence belongs to the UPF0301 (AlgH) family.

This Anaeromyxobacter dehalogenans (strain 2CP-C) protein is UPF0301 protein Adeh_3962.